Here is a 331-residue protein sequence, read N- to C-terminus: MDIYDDKGLQTIKLFNNEFDCIRNDIRELFKHVTDSDSIQLPMEDNSDIIENIRKILYRRLKNVECVDIDSTITFMKYDPNDDNKRTCSNWVPLTNNYMEYCLVIYLETPICGGKIKLYHPTGNIKSDKDIMFAKTLDFKSKKVLTGRKTIAVLDISVSYNRSITTIHYNDDVNIDIHTDKNGKELCYCYITIDDHYLVDVETIGVIVNRSGKCLLVNNHLGIGIVKDKRISDSFGDVCMDTIFDFSEARELFSLTNDDNRNIAWDTDKLDDDTDIWTPVTEDDYKFLSRLVLYAKSQSDTVFDYYVLTGDTEPPTVFIFKVTRFYFNMLK.

Belongs to the poxviridae C4/C10 protein family.

In Vaccinia virus (strain Copenhagen) (VACV), this protein is Protein C10.